The sequence spans 186 residues: Lipid A acyltransferase PagP (186 aa).

Positions 1–19 are cleaved as a signal peptide; that stretch reads MKRLISCLTIICALNRSAA. Residues His-60, Asp-103, and Ser-104 contribute to the active site.

Belongs to the lipid A palmitoyltransferase family. As to quaternary structure, homodimer.

It is found in the cell outer membrane. It catalyses the reaction a lipid A + a 1,2-diacyl-sn-glycero-3-phosphocholine = a hepta-acyl lipid A + a 2-acyl-sn-glycero-3-phosphocholine. The enzyme catalyses a lipid IVA + a 1,2-diacyl-sn-glycero-3-phosphocholine = a lipid IVB + a 2-acyl-sn-glycero-3-phosphocholine. It carries out the reaction a lipid IIA + a 1,2-diacyl-sn-glycero-3-phosphocholine = a lipid IIB + a 2-acyl-sn-glycero-3-phosphocholine. Transfers a fatty acid residue from the sn-1 position of a phospholipid to the N-linked hydroxyfatty acid chain on the proximal unit of lipid A or its precursors. Confers resistance to cationic antimicrobial peptides (CAMPs). Promotes the ability of L.pneumophila to replicate and/or survive in macrophages. Important for ability to kill macrophages and to promote the virulence. This Legionella pneumophila protein is Lipid A acyltransferase PagP.